The primary structure comprises 756 residues: Catalase-peroxidase (756 aa).

The segment at residues 91–244 (WHSAGTYRTG…LAAVQMGLIY (154 aa)) is a cross-link (tryptophyl-tyrosyl-methioninium (Trp-Tyr) (with M-270)). H92 functions as the Proton acceptor in the catalytic mechanism. A disordered region spans residues 198–230 (AQKKMQQPGDGTLVAEPENHANEESRTASGERN). Residues 214–223 (PENHANEESR) show a composition bias toward basic and acidic residues. Residues 244-270 (YVNPEGPEGVPDPVASAKDIRETFGRM) constitute a cross-link (tryptophyl-tyrosyl-methioninium (Tyr-Met) (with W-91)). H285 lines the heme b pocket. The disordered stretch occupies residues 371-390 (KNGAGAGKIPDAHDPSKRHA).

The protein belongs to the peroxidase family. Peroxidase/catalase subfamily. As to quaternary structure, homodimer or homotetramer. Heme b serves as cofactor. In terms of processing, formation of the three residue Trp-Tyr-Met cross-link is important for the catalase, but not the peroxidase activity of the enzyme.

The enzyme catalyses H2O2 + AH2 = A + 2 H2O. It catalyses the reaction 2 H2O2 = O2 + 2 H2O. Functionally, bifunctional enzyme with both catalase and broad-spectrum peroxidase activity. The sequence is that of Catalase-peroxidase from Pseudomonas savastanoi pv. phaseolicola (strain 1448A / Race 6) (Pseudomonas syringae pv. phaseolicola (strain 1448A / Race 6)).